The primary structure comprises 706 residues: Melanopsin (706 aa).

Over 1–86 (MTEIPSFQPP…VWDIPPLAHY (86 aa)) the chain is Extracellular. N-linked (GlcNAc...) asparagine glycans are attached at residues N12, N64, and N69. The chain crosses the membrane as a helical span at residues 87–107 (IVGTAVFCIGCCGMFGNAVVV). Over 108–121 (YSFIKSKGLRTPAN) the chain is Cytoplasmic. A helical transmembrane segment spans residues 122–142 (FFIINLALSDFLMNLTNMPIF). At 143–159 (AVNSAFQRWLLSDFACE) the chain is on the extracellular side. C158 and C236 are joined by a disulfide. Residues 160 to 180 (LYGFAGGLFGCLSINTLMAIS) form a helical membrane-spanning segment. Residues 181–201 (MDRYLVITKPFLVMRIVTKQR) are Cytoplasmic-facing. The helical transmembrane segment at 202–222 (VMFAILLLWIWSLVWALPPLF) threads the bilayer. Residues 223–248 (GWSAYVSEGFGTSCTFDYMTPKLSYH) are Extracellular-facing. The helical transmembrane segment at 249 to 269 (IFTYIIFFTMYFIPGGVMIYC) threads the bilayer. The Cytoplasmic portion of the chain corresponds to 270–314 (YYNIFATVKSGDKQFGKAVKEMAHEDVKNKAQQERQRKNEIKTAK). Residues 315-335 (IAFIVISLFMSAWTPYAVVSA) form a helical membrane-spanning segment. The Extracellular portion of the chain corresponds to 336–351 (LGTLGYQDLVTPYLQS). Residues 352-372 (IPAMFAKSSAVYSPIVYAITY) traverse the membrane as a helical segment. K358 bears the N6-(retinylidene)lysine mark. At 373–706 (PKFREAVKKH…LSEAHDETVL (334 aa)) the chain is on the cytoplasmic side. Disordered regions lie at residues 393–446 (SEEE…RQDT), 571–599 (RTES…SFNT), and 630–658 (QSSE…NETE). Composition is skewed to low complexity over residues 404–418 (QSSA…QTTA) and 426–442 (SVDS…SGVS). A compositionally biased stretch (basic and acidic residues) spans 571 to 593 (RTESGYDRSQDSQRKKVVGDTHR). Positions 645–658 (GITEVDTDSENETE) are enriched in acidic residues.

This sequence belongs to the G-protein coupled receptor 1 family. Opsin subfamily. As to expression, expressed in Joseph cells and photoreceptor cells of the dorsal ocelli.

The protein localises to the cell membrane. Photoreceptor implicated in non-image-forming responses to light. Photoisomerizes covalently bound all-trans retinal back to 11-cis retinal. Most likely coupled to the G(q) signaling cascade. In Branchiostoma belcheri (Amphioxus), this protein is Melanopsin.